The following is a 1057-amino-acid chain: Carbamoyl phosphate synthase large chain (1057 aa).

Residues 1-401 (MPKRDDIQTI…SLLKAIRSLE (401 aa)) are carboxyphosphate synthetic domain. ATP is bound by residues Arg129, Arg169, Gly175, Gly176, Lys208, Ile210, Glu215, Gly241, Ile242, His243, Gln284, and Glu298. Positions 133–327 (RTLMNDLNVP…IAKLAAKIAV (195 aa)) constitute an ATP-grasp 1 domain. Positions 284, 298, and 300 each coordinate Mg(2+). Mn(2+)-binding residues include Gln284, Glu298, and Asn300. Residues 402 to 546 (YGVHHLGLPN…YGTYEDENES (145 aa)) are oligomerization domain. The segment at 547–929 (IVTDKEKILV…ALYKGLTGSG (383 aa)) is carbamoyl phosphate synthetic domain. Residues 671–861 (EALLREISVP…MAQLAMRAIM (191 aa)) enclose the ATP-grasp 2 domain. ATP-binding residues include Arg707, Arg746, Leu748, Glu752, Gly777, Val778, His779, Ser780, Gln820, and Glu832. Positions 820, 832, and 834 each coordinate Mg(2+). Residues Gln820, Glu832, and Asn834 each coordinate Mn(2+). The MGS-like domain occupies 930 to 1057 (FEVKDHGTVL…ESMTFTMRNV (128 aa)). The segment at 930–1057 (FEVKDHGTVL…ESMTFTMRNV (128 aa)) is allosteric domain.

This sequence belongs to the CarB family. Composed of two chains; the small (or glutamine) chain promotes the hydrolysis of glutamine to ammonia, which is used by the large (or ammonia) chain to synthesize carbamoyl phosphate. Tetramer of heterodimers (alpha,beta)4. It depends on Mg(2+) as a cofactor. The cofactor is Mn(2+).

It catalyses the reaction hydrogencarbonate + L-glutamine + 2 ATP + H2O = carbamoyl phosphate + L-glutamate + 2 ADP + phosphate + 2 H(+). The catalysed reaction is hydrogencarbonate + NH4(+) + 2 ATP = carbamoyl phosphate + 2 ADP + phosphate + 2 H(+). It participates in amino-acid biosynthesis; L-arginine biosynthesis; carbamoyl phosphate from bicarbonate: step 1/1. It functions in the pathway pyrimidine metabolism; UMP biosynthesis via de novo pathway; (S)-dihydroorotate from bicarbonate: step 1/3. Large subunit of the glutamine-dependent carbamoyl phosphate synthetase (CPSase). CPSase catalyzes the formation of carbamoyl phosphate from the ammonia moiety of glutamine, carbonate, and phosphate donated by ATP, constituting the first step of 2 biosynthetic pathways, one leading to arginine and/or urea and the other to pyrimidine nucleotides. The large subunit (synthetase) binds the substrates ammonia (free or transferred from glutamine from the small subunit), hydrogencarbonate and ATP and carries out an ATP-coupled ligase reaction, activating hydrogencarbonate by forming carboxy phosphate which reacts with ammonia to form carbamoyl phosphate. This is Carbamoyl phosphate synthase large chain from Staphylococcus epidermidis (strain ATCC 35984 / DSM 28319 / BCRC 17069 / CCUG 31568 / BM 3577 / RP62A).